The sequence spans 312 residues: Coiled-coil domain-containing protein 160 homolog (312 aa).

Residues 126-281 are a coiled coil; sequence SEGAKFKNQL…EERKREKTHS (156 aa).

It belongs to the CCDC160 family.

This is Coiled-coil domain-containing protein 160 homolog from Xenopus tropicalis (Western clawed frog).